Here is a 4218-residue protein sequence, read N- to C-terminus: Protein Obscurin (4218 aa).

Residues 3 to 71 (AVADIVFVSR…PIDILEFNPT (69 aa)) form the SH3 domain. The 179-residue stretch at 86–264 (RKLTILRELV…LSVPSRAYDN (179 aa)) folds into the DH domain. Positions 439 to 466 (SKETKERLQHEQQELLKLEQEAIELYKK) form a coiled coil. Disordered regions lie at residues 465–592 (KKQQ…SHSK), 684–703 (SLRD…QQGY), 728–750 (SGAN…NFTR), and 923–1010 (RYET…EDRP). Composition is skewed to low complexity over residues 466-490 (KQQS…VKSS) and 505-517 (AQVK…KVVS). Over residues 578–592 (KEVRKEVPPSASHSK) the composition is skewed to basic and acidic residues. Positions 923–935 (RYETKTRDYDRGT) are enriched in basic and acidic residues. Polar residues predominate over residues 936–948 (SYDSTVERSQYGI). Basic and acidic residues-rich tracts occupy residues 950–962 (SRRD…KVEA) and 972–986 (TESR…RAES). A compositionally biased stretch (low complexity) spans 987 to 996 (RASYSVAESR). Ig-like C2-type domains are found at residues 1017–1103 (PVVV…TTVS), 1152–1298 (PRVK…AELS), 1313–1400 (PTLV…SSIN), 1504–1594 (PVIV…TQLL), 1599–1689 (PEFT…CVVT), 1694–1785 (PKVK…CKVA), 1815–1906 (PEIV…LSLS), 2018–2107 (PEIS…FNLA), 2113–2214 (PTFI…FKLA), 2220–2305 (PSFV…EKVA), 2318–2409 (PKFL…VEIV), 2415–2505 (PVFV…AKLY), 2519–2609 (PQFV…ANVR), 2614–2698 (PPVF…KDIT), and 2716–2792 (PPVF…SCRI). Residues C1199 and C1282 are joined by a disulfide bond. The cysteines at positions 2739 and 2790 are disulfide-linked. Positions 2832–2933 (APPPLSEGPI…TYRQKLVPDP (102 aa)) constitute a Fibronectin type-III 1 domain. A Protein kinase 1 domain is found at 3186–3440 (YDIGDELGRG…VKTALKHPWF (255 aa)). ATP is bound by residues G3198, K3215, E3260, A3262, E3266, K3310, and D3326. One can recognise an Ig-like C2-type 16 domain in the interval 3654–3738 (PFFREKPQTI…ARNKVGQTVA (85 aa)). The Fibronectin type-III 2 domain occupies 3750–3843 (APDSPEISAN…IPVSASTVGG (94 aa)). The region spanning 3897–4151 (YSFISEIARG…TEDCLEHRWL (255 aa)) is the Protein kinase 2 domain.

It belongs to the protein kinase superfamily. CAMK Ser/Thr protein kinase family. In terms of assembly, interacts with myosin. May interact (via protein kinase domain 1) with ball. May interact (via protein kinase domain 1 or 2) with mask. May interact (via protein kinase domain 2) with Tm1/tropomyosin-1. In terms of tissue distribution, expressed in the thoracic muscles including the indirect flight muscles (IFM) (at protein level).

The protein localises to the cytoplasm. It localises to the myofibril. Its subcellular location is the sarcomere. It is found in the m line. Its function is as follows. Structural component of the muscle M line which is involved in assembly and organization of sarcomere. Required for the development and organization of indirect flight muscle sarcomeres by regulating the formation of M line and H zone and the correct assembly of thick and thin filaments in the sarcomere. Lacks serine/threonine-protein kinase activity. This chain is Protein Obscurin, found in Drosophila melanogaster (Fruit fly).